A 78-amino-acid polypeptide reads, in one-letter code: uncharacterized protein (78 aa).

This is an uncharacterized protein from Schizosaccharomyces pombe (strain 972 / ATCC 24843) (Fission yeast).